Reading from the N-terminus, the 78-residue chain is Ferritin light chain (78 aa).

The region spanning 1–59 (EAALHLEKGLNQALVDLHALGSARADPHLCDFLENHFLDEEVKLIKKMGDHLTNLRRLS) is the Ferritin-like diiron domain.

Belongs to the ferritin family. As to quaternary structure, oligomer of 24 subunits. There are two types of subunits: L (light) chain and H (heavy) chain. The major chain can be light or heavy, depending on the species and tissue type. The functional molecule forms a roughly spherical shell with a diameter of 12 nm and contains a central cavity into which the insoluble mineral iron core is deposited. Interacts with NCOA4.

It is found in the cytoplasmic vesicle. Its subcellular location is the autophagosome. It localises to the cytoplasm. The protein localises to the autolysosome. In terms of biological role, stores iron in a soluble, non-toxic, readily available form. Important for iron homeostasis. Iron is taken up in the ferrous form and deposited as ferric hydroxides after oxidation. Also plays a role in delivery of iron to cells. Mediates iron uptake in capsule cells of the developing kidney. Delivery to lysosomes by the cargo receptor NCOA4 for autophagic degradation and release or iron. The polypeptide is Ferritin light chain (FTL) (Sus scrofa (Pig)).